The primary structure comprises 1925 residues: Diacylglycerol kinase eta (1925 aa).

The PH domain occupies 82–175; it reads AIIREGYLMK…WLGSLKTATA (94 aa). 2 consecutive Phorbol-ester/DAG-type zinc fingers follow at residues 195–245 and 268–319; these read HHHW…IANC and PHQW…PIVC. The DAGKc domain maps to 350–486; it reads GNFSPLLVFV…DRWSIMVFEK (137 aa). Disordered regions lie at residues 620 to 641, 783 to 805, 847 to 872, 1013 to 1065, 1113 to 1141, 1167 to 1234, 1256 to 1276, and 1385 to 1405; these read EKDN…SEKE, ANID…TPTE, DKER…SEPQ, TTLC…NPQQ, DRNS…TRTY, NTTT…SSAS, IRRH…KDKD, and FSAG…PTEE. A compositionally biased stretch (polar residues) spans 792-802; it reads LSPSSEAGENT. The span at 863 to 872 shows a compositional bias: basic and acidic residues; it reads ADVNEKSEPQ. Residues 1115 to 1128 show a composition bias toward basic and acidic residues; sequence NSGDNHNDNGKNEE. Over residues 1167–1187 the composition is skewed to low complexity; it reads NTTTSTSSSISTTTTTSTTST. Basic and acidic residues predominate over residues 1386 to 1405; the sequence is SAGDKDEKPGKDKERTPTEE. An SAM domain is found at 1862–1925; the sequence is WSVNEVVTWL…LQAIKDLSEN (64 aa).

It belongs to the eukaryotic diacylglycerol kinase family.

The protein localises to the cytoplasm. It catalyses the reaction a 1,2-diacyl-sn-glycerol + ATP = a 1,2-diacyl-sn-glycero-3-phosphate + ADP + H(+). Phosphorylates diacylglycerol (DAG) to generate phosphatidic acid (PA). The protein is Diacylglycerol kinase eta of Drosophila mojavensis (Fruit fly).